Consider the following 202-residue polypeptide: MIQTISADGIGYGATLQNHFLIAMPGMRDERFARSVIYMCAHNAEGAMGIIINRGQQLGFTDILVELGILERSQSIRLPARARNIAVRSGGPVDRSRGFVLHSDDYVVESSMAVSEKICLTATVDILRAISTGRGPSQALMALGYSGWGAGQLEAEIADNGWLACPASPELLFDAEIDTIYDRILAANGIDPLHLSQVAGHA.

Belongs to the UPF0301 (AlgH) family.

This Chelativorans sp. (strain BNC1) protein is UPF0301 protein Meso_0753.